The primary structure comprises 1172 residues: Lysylphosphatidylglycerol biosynthesis bifunctional protein LysX (1172 aa).

The interval 1-34 is disordered; the sequence is MGLHLTVPGLRRDGRGVQSNSHDTSSKTTADISR. The segment at 1 to 663 is phosphatidylglycerol lysyltransferase; it reads MGLHLTVPGL…LLHHDGSAPD (663 aa). Residues 17–31 are compositionally biased toward polar residues; that stretch reads VQSNSHDTSSKTTAD. The next 7 helical transmembrane spans lie at 80–100, 122–142, 146–166, 177–197, 214–234, 272–292, and 612–632; these read VPAA…LASV, FPDT…ALTA, IAWL…AAEI, FGEN…VLGY, AVWL…VELF, AIFG…LFLS, and VIPR…LPFS. Residues 664 to 1172 form a lysine--tRNA ligase region; the sequence is VSGLRQVGLT…TLPFPLAKPH (509 aa). Positions 726 to 804 form a DNA-binding region, OB; that stretch reads VSVSGRIMRI…SLIVSGWRLI (79 aa). The Mg(2+) site is built by aspartate 1084 and glutamate 1091.

This sequence in the N-terminal section; belongs to the LPG synthetase family. It in the C-terminal section; belongs to the class-II aminoacyl-tRNA synthetase family. Mg(2+) serves as cofactor.

It localises to the cell membrane. The enzyme catalyses tRNA(Lys) + L-lysine + ATP = L-lysyl-tRNA(Lys) + AMP + diphosphate. It catalyses the reaction L-lysyl-tRNA(Lys) + a 1,2-diacyl-sn-glycero-3-phospho-(1'-sn-glycerol) = a 1,2-diacyl-sn-glycero-3-phospho-1'-(3'-O-L-lysyl)-sn-glycerol + tRNA(Lys). In terms of biological role, catalyzes the production of L-lysyl-tRNA(Lys)transfer and the transfer of a lysyl group from L-lysyl-tRNA(Lys) to membrane-bound phosphatidylglycerol (PG), which produces lysylphosphatidylglycerol (LPG), one of the components of the bacterial membrane with a positive net charge. LPG synthesis contributes to the resistance to cationic antimicrobial peptides (CAMPs) and likely protects M.tuberculosis against the CAMPs produced by competiting microorganisms (bacteriocins). In fact, the modification of anionic phosphatidylglycerol with positively charged L-lysine results in repulsion of the peptides. This is Lysylphosphatidylglycerol biosynthesis bifunctional protein LysX (lysX) from Mycobacterium bovis (strain BCG / Pasteur 1173P2).